The chain runs to 874 residues: Translation initiation factor IF-2 (874 aa).

A disordered region spans residues 1–289 (MKIKNAQLTK…KHYDEHSVQR (289 aa)). Over residues 31–48 (SSSEKPTTKVPEKVAKEK) the composition is skewed to basic and acidic residues. Polar residues predominate over residues 81 to 104 (RSSFASEDSTIPSPVSVDTESTAF). A compositionally biased stretch (low complexity) spans 105–118 (SPPVVEEVVSPLES). 2 stretches are compositionally biased toward basic and acidic residues: residues 144-158 (PPKK…KEPP) and 186-198 (PKKE…KERT). A compositionally biased stretch (polar residues) spans 199-211 (GTVQTKPQQSSEV). Positions 228–260 (YRRDTSKRPGSDFRDRSKKDDSPKAFTGRDRYG) are enriched in basic and acidic residues. Basic residues predominate over residues 271-280 (RKKRVQKTKK). Positions 380–549 (IRPPIVAFMG…ALQAEVLELK (170 aa)) constitute a tr-type G domain. The interval 389 to 396 (GHVDHGKT) is G1. 389–396 (GHVDHGKT) provides a ligand contact to GTP. A G2 region spans residues 414–418 (AITQH). A G3 region spans residues 435 to 438 (DTPG). Residues 435–439 (DTPGH) and 489–492 (NKCD) each bind GTP. The interval 489-492 (NKCD) is G4. Residues 525–527 (SAK) are G5.

Belongs to the TRAFAC class translation factor GTPase superfamily. Classic translation factor GTPase family. IF-2 subfamily.

The protein localises to the cytoplasm. One of the essential components for the initiation of protein synthesis. Protects formylmethionyl-tRNA from spontaneous hydrolysis and promotes its binding to the 30S ribosomal subunits. Also involved in the hydrolysis of GTP during the formation of the 70S ribosomal complex. In Chlamydia abortus (strain DSM 27085 / S26/3) (Chlamydophila abortus), this protein is Translation initiation factor IF-2.